The sequence spans 93 residues: Small integral membrane protein 36 (93 aa).

A helical membrane pass occupies residues 14–34 (LIILVASYVILLLVFLVSCVL). Residues 70 to 93 (SHWARGPSLHLKDPAPLGKKSTVV) are disordered.

It is found in the membrane. This chain is Small integral membrane protein 36, found in Mus musculus (Mouse).